Reading from the N-terminus, the 799-residue chain is Sodium- and chloride-dependent glycine transporter 2 (799 aa).

Positions 1 to 64 (MDCSAPKEMN…RSASTGAQTF (64 aa)) are disordered. Residues 1–201 (MDCSAPKEMN…ARGNWSSKLD (201 aa)) are Cytoplasmic-facing. Positions 40 to 57 (PAAAPAAAVQPPRVPRSA) are enriched in low complexity. A Phosphoserine modification is found at serine 58. Residue threonine 59 is modified to Phosphothreonine. Residue serine 86 is modified to Phosphoserine. The next 3 helical transmembrane spans lie at 202-222 (FILSMVGYAVGLGNVWRFPYL), 230-249 (AFLIPYLMMLALAGLPIFFL), and 273-293 (GCGIAMLIISVLIAIYYNVII). Na(+) is bound by residues glycine 208, alanine 210, valine 211, and asparagine 215. The Extracellular segment spans residues 294–395 (CYTLFYLFAS…AGIEYPGEIR (102 aa)). A disulfide bridge connects residues cysteine 313 and cysteine 322. N-linked (GlcNAc...) asparagine glycosylation is found at asparagine 345, asparagine 355, asparagine 360, and asparagine 366. 5 consecutive transmembrane segments (helical) span residues 396-414 (WPLAFCLFLAWVIVYASLA), 423-440 (VVYFTATFPYVVLVILLI), 476-493 (IFFSLSAAWGGLITLSSY), 505-526 (LIVTCTNSATSIFAGFVIFSVI), and 559-578 (LPLSPFWAIIFFLMLLTLGL). Serine 479, asparagine 511, leucine 576, and aspartate 579 together coordinate Na(+). 4 helical membrane-spanning segments follow: residues 606–624 (VFTLGCCICFFIMGFPMIT), 640–660 (SYALVIIAIFELVGISYVYGL), 681–700 (VCWAFVTPTILTFILCFSFY), and 719–737 (LGWLMLACSVIWIPIMFVI). At 738 to 799 (KMYLAPGRFI…VKDLELGTQC (62 aa)) the chain is on the cytoplasmic side.

This sequence belongs to the sodium:neurotransmitter symporter (SNF) (TC 2.A.22) family. SLC6A5 subfamily. In terms of processing, N-glycosylated. Specifically expressed in spinal cord, brain stem, and to a lesser extent in the cerebellum.

The protein resides in the cell membrane. The enzyme catalyses glycine(out) + chloride(out) + 3 Na(+)(out) = glycine(in) + chloride(in) + 3 Na(+)(in). In terms of biological role, sodium- and chloride-dependent glycine transporter. Terminates the action of glycine by its high affinity sodium-dependent reuptake into presynaptic terminals. May be responsible for the termination of neurotransmission at strychnine-sensitive glycinergic synapses. The polypeptide is Sodium- and chloride-dependent glycine transporter 2 (Slc6a5) (Rattus norvegicus (Rat)).